We begin with the raw amino-acid sequence, 45 residues long: Small polypeptide DEVIL 23 (45 aa).

A required for DVL/RTFL small polypeptide activity region spans residues 13–44; it reads KSTLRCWDWCKEQRTRAYIIWRCLIFLLRWDD. A helical transmembrane segment spans residues 22–39; it reads CKEQRTRAYIIWRCLIFL.

The protein belongs to the DVL/RTFL small polypeptides family.

Its subcellular location is the cell membrane. In terms of biological role, small polypeptide acting as a regulatory molecule which coordinates cellular responses required for differentiation, growth and development, probably by restricting polar cell proliferation in lateral organs and coordinating socket cell recruitment and differentiation at trichome sites. This is Small polypeptide DEVIL 23 from Arabidopsis thaliana (Mouse-ear cress).